Reading from the N-terminus, the 353-residue chain is Cyclic GMP-AMP synthase-like receptor (353 aa).

Residues serine 60 and 72–74 each bind ATP; that span reads EYD. Glutamate 72, aspartate 74, and aspartate 183 together coordinate Mg(2+). Aspartate 183 provides a ligand contact to GTP. Residue lysine 245 participates in ATP binding. Mn(2+) contacts are provided by leucine 269 and glutamate 270.

Belongs to the mab-21 family. Mg(2+) serves as cofactor. The cofactor is Mn(2+).

The catalysed reaction is GTP + ATP = 2',3'-cGAMP + 2 diphosphate. It carries out the reaction GTP + ATP = pppGp(2'-5')A + diphosphate. The enzyme catalyses pppGp(2'-5')A = 2',3'-cGAMP + diphosphate. Functionally, nucleotidyltransferase that catalyzes the formation of cyclic GMP-AMP (2',3'-cGAMP) from ATP and GTP and plays a key role in innate immunity. Acts as a key sensor of double-stranded RNA (dsRNA), the presence of dsRNA in the cytoplasm being a danger signal that triggers the immune responses. Directly binds dsRNA, activating the nucleotidyltransferase activity, leading to synthesis of 2',3'-cGAMP, a second messenger that binds to and activates Sting, thereby triggering the immune response via activation of the NF-kappa-B transcription factor. This Nicrophorus vespilloides (Boreal carrion beetle) protein is Cyclic GMP-AMP synthase-like receptor.